Reading from the N-terminus, the 585-residue chain is Arginine--tRNA ligase (585 aa).

Positions 127-137 (PNTNKPLHVGH) match the 'HIGH' region motif.

This sequence belongs to the class-I aminoacyl-tRNA synthetase family. Monomer.

It is found in the cytoplasm. The catalysed reaction is tRNA(Arg) + L-arginine + ATP = L-arginyl-tRNA(Arg) + AMP + diphosphate. The sequence is that of Arginine--tRNA ligase (argS) from Borreliella burgdorferi (strain ATCC 35210 / DSM 4680 / CIP 102532 / B31) (Borrelia burgdorferi).